Here is a 373-residue protein sequence, read N- to C-terminus: Chaperone protein DnaJ (373 aa).

The 66-residue stretch at 5 to 70 (DYYEVLGLQK…EKKSNYDQFG (66 aa)) folds into the J domain. The CR-type zinc finger occupies 132–214 (GVEKEITVNR…CRGNGNVRKT (83 aa)). Cysteine 145, cysteine 148, cysteine 162, cysteine 165, cysteine 188, cysteine 191, cysteine 202, and cysteine 205 together coordinate Zn(2+). CXXCXGXG motif repeat units follow at residues 145-152 (CEHCNGSG), 162-169 (CPTCSGTG), 188-195 (CDRCSGTG), and 202-209 (CTHCRGNG).

This sequence belongs to the DnaJ family. Homodimer. It depends on Zn(2+) as a cofactor.

The protein localises to the cytoplasm. Its function is as follows. Participates actively in the response to hyperosmotic and heat shock by preventing the aggregation of stress-denatured proteins and by disaggregating proteins, also in an autonomous, DnaK-independent fashion. Unfolded proteins bind initially to DnaJ; upon interaction with the DnaJ-bound protein, DnaK hydrolyzes its bound ATP, resulting in the formation of a stable complex. GrpE releases ADP from DnaK; ATP binding to DnaK triggers the release of the substrate protein, thus completing the reaction cycle. Several rounds of ATP-dependent interactions between DnaJ, DnaK and GrpE are required for fully efficient folding. Also involved, together with DnaK and GrpE, in the DNA replication of plasmids through activation of initiation proteins. The chain is Chaperone protein DnaJ from Clostridium botulinum (strain Alaska E43 / Type E3).